The primary structure comprises 85 residues: Small integral membrane protein 35 (85 aa).

The helical transmembrane segment at 7 to 27 (ISTLGMILGVGLSLLLVSILG) threads the bilayer.

The protein resides in the membrane. The polypeptide is Small integral membrane protein 35 (Mus musculus (Mouse)).